Reading from the N-terminus, the 738-residue chain is Isocitrate dehydrogenase [NADP] (738 aa).

Positions 83 and 85 each coordinate NADP(+). D-threo-isocitrate-binding residues include S130, N133, R137, R143, and K253. N133 lines the NADP(+) pocket. D346 contributes to the Mg(2+) binding site. The D-threo-isocitrate site is built by Y416 and R543. Mg(2+)-binding residues include D544 and D548. 5 residues coordinate NADP(+): G580, H585, R596, D598, and R645.

It belongs to the monomeric-type IDH family. As to quaternary structure, monomer. Mg(2+) is required as a cofactor. The cofactor is Mn(2+).

The protein localises to the cytoplasm. It carries out the reaction D-threo-isocitrate + NADP(+) = 2-oxoglutarate + CO2 + NADPH. Its activity is regulated as follows. Weakly inhibited by oxaloacetate, 2-oxoglutarate and citrate. Severely inhibited by oxaloacetate plus glyoxylate. Its function is as follows. Catalyzes the oxidative decarboxylation of isocitrate to 2-oxoglutarate and carbon dioxide with the concomitant reduction of NADP(+). Cannot use NAD(+). The chain is Isocitrate dehydrogenase [NADP] from Corynebacterium glutamicum (strain ATCC 13032 / DSM 20300 / JCM 1318 / BCRC 11384 / CCUG 27702 / LMG 3730 / NBRC 12168 / NCIMB 10025 / NRRL B-2784 / 534).